A 219-amino-acid chain; its full sequence is MGQKIHPLGFRLGVTQSHLSNWCVQPSQYSELLQEDEKLRGCIKEYVRKYVRTAENYGGIDRIEIQRKTSAIKVEIHTGFPKLFVEKLGPRLKEIRREMQNTLQKSKHLKFIISLAEVEKPYAKATILAEYIAVQVERRVAFRKTIKKAIQLAKEQGNVKGIKIQIAGRLNGAEIARSEWAREGRVPLQTLRAQIDYCHYPAHTIYGVLGIRVWIFQEK.

Residues 47–119 form the KH type-2 domain; that stretch reads VRKYVRTAEN…KFIISLAEVE (73 aa).

This sequence belongs to the universal ribosomal protein uS3 family. In terms of assembly, part of the 30S ribosomal subunit.

It localises to the plastid. The protein localises to the chloroplast. The sequence is that of Small ribosomal subunit protein uS3c (rps3) from Staurastrum punctulatum (Green alga).